The sequence spans 584 residues: Aspartate--tRNA(Asp/Asn) ligase (584 aa).

Glu-173 is a binding site for L-aspartate. Residues 197–200 (QLFK) are aspartate. Arg-219 is an L-aspartate binding site. Residues 219-221 (RDE) and Gln-228 contribute to the ATP site. His-446 is a binding site for L-aspartate. Residue Glu-476 coordinates ATP. Residue Arg-483 coordinates L-aspartate. 528-531 (GLDR) lines the ATP pocket.

The protein belongs to the class-II aminoacyl-tRNA synthetase family. Type 1 subfamily. Homodimer.

Its subcellular location is the cytoplasm. It carries out the reaction tRNA(Asx) + L-aspartate + ATP = L-aspartyl-tRNA(Asx) + AMP + diphosphate. Aspartyl-tRNA synthetase with relaxed tRNA specificity since it is able to aspartylate not only its cognate tRNA(Asp) but also tRNA(Asn). Reaction proceeds in two steps: L-aspartate is first activated by ATP to form Asp-AMP and then transferred to the acceptor end of tRNA(Asp/Asn). The chain is Aspartate--tRNA(Asp/Asn) ligase from Sulfurovum sp. (strain NBC37-1).